The sequence spans 94 residues: uncharacterized protein (94 aa).

The chain crosses the membrane as a helical span at residues 13-33 (IVICLTTIISVTIFYILVSFF).

The protein localises to the membrane. This is an uncharacterized protein from Dictyostelium discoideum (Social amoeba).